The following is a 149-amino-acid chain: Myoglobin (149 aa).

The residue at position 2 (V2) is an N-acetylvaline. Residues 2 to 143 (VDWEKVNSVW…ICSDIEKEYK (142 aa)) enclose the Globin domain. H89 contributes to the heme b binding site.

It belongs to the globin family. Monomeric.

The protein localises to the cytoplasm. It localises to the sarcoplasm. It catalyses the reaction Fe(III)-heme b-[protein] + nitric oxide + H2O = Fe(II)-heme b-[protein] + nitrite + 2 H(+). The catalysed reaction is H2O2 + AH2 = A + 2 H2O. Functionally, monomeric heme protein which primary function is to store oxygen and facilitate its diffusion within muscle tissues. Reversibly binds oxygen through a pentacoordinated heme iron and enables its timely and efficient release as needed during periods of heightened demand. Depending on the oxidative conditions of tissues and cells, and in addition to its ability to bind oxygen, it also has a nitrite reductase activity whereby it regulates the production of bioactive nitric oxide. Under stress conditions, like hypoxia and anoxia, it also protects cells against reactive oxygen species thanks to its pseudoperoxidase activity. The polypeptide is Myoglobin (mb) (Mustelus antarcticus (Gummy shark)).